We begin with the raw amino-acid sequence, 363 residues long: Dihydroorotate dehydrogenase (quinone) (363 aa).

FMN-binding positions include 67-71 and Thr-91; that span reads AGLDK. Lys-71 contributes to the substrate binding site. Residue 116 to 120 participates in substrate binding; sequence NRMGF. FMN-binding residues include Asn-145 and Asn-178. Position 178 (Asn-178) interacts with substrate. Ser-181 functions as the Nucleophile in the catalytic mechanism. A substrate-binding site is contributed by Asn-183. Lys-219 and Thr-247 together coordinate FMN. 248–249 is a binding site for substrate; it reads NT. FMN-binding positions include Gly-268, Gly-297, and 318-319; that span reads YT.

Belongs to the dihydroorotate dehydrogenase family. Type 2 subfamily. In terms of assembly, monomer. It depends on FMN as a cofactor.

The protein resides in the cell membrane. It catalyses the reaction (S)-dihydroorotate + a quinone = orotate + a quinol. The protein operates within pyrimidine metabolism; UMP biosynthesis via de novo pathway; orotate from (S)-dihydroorotate (quinone route): step 1/1. Catalyzes the conversion of dihydroorotate to orotate with quinone as electron acceptor. The polypeptide is Dihydroorotate dehydrogenase (quinone) (Myxococcus xanthus (strain DK1622)).